The primary structure comprises 78 residues: uncharacterized protein (78 aa).

The next 2 helical transmembrane spans lie at 5–24 (LALLILVIPGAISALGIKLM) and 39–61 (LWLQGLSGFIFFAIGLYVLAGFI).

Its subcellular location is the cell membrane. This is an uncharacterized protein from Bacillus subtilis (strain 168).